Reading from the N-terminus, the 110-residue chain is Large ribosomal subunit protein uL22 (110 aa).

The protein belongs to the universal ribosomal protein uL22 family. Part of the 50S ribosomal subunit.

This protein binds specifically to 23S rRNA; its binding is stimulated by other ribosomal proteins, e.g. L4, L17, and L20. It is important during the early stages of 50S assembly. It makes multiple contacts with different domains of the 23S rRNA in the assembled 50S subunit and ribosome. Its function is as follows. The globular domain of the protein is located near the polypeptide exit tunnel on the outside of the subunit, while an extended beta-hairpin is found that lines the wall of the exit tunnel in the center of the 70S ribosome. In Geobacter metallireducens (strain ATCC 53774 / DSM 7210 / GS-15), this protein is Large ribosomal subunit protein uL22.